We begin with the raw amino-acid sequence, 101 residues long: Urease subunit beta (101 aa).

It belongs to the urease beta subunit family. In terms of assembly, heterotrimer of UreA (gamma), UreB (beta) and UreC (alpha) subunits. Three heterotrimers associate to form the active enzyme.

The protein localises to the cytoplasm. The enzyme catalyses urea + 2 H2O + H(+) = hydrogencarbonate + 2 NH4(+). Its pathway is nitrogen metabolism; urea degradation; CO(2) and NH(3) from urea (urease route): step 1/1. In Variovorax paradoxus (strain S110), this protein is Urease subunit beta.